A 329-amino-acid chain; its full sequence is Quinone oxidoreductase (329 aa).

Ala2 carries the post-translational modification N-acetylalanine. Lys23 bears the N6-acetyllysine mark. NADP(+) is bound by residues Tyr53, 158-161 (SGGV), Gly181, His200, Asn229, 246-249 (VGCR), and 269-271 (VSL). Lys296 is modified (N6-succinyllysine).

It belongs to the zinc-containing alcohol dehydrogenase family. Quinone oxidoreductase subfamily. As to quaternary structure, homotetramer.

It localises to the cytoplasm. It carries out the reaction 2 a quinone + NADPH + H(+) = 2 a 1,4-benzosemiquinone + NADP(+). Does not have alcohol dehydrogenase activity. Binds NADP and acts through a one-electron transfer process. Orthoquinones, such as 1,2-naphthoquinone or 9,10-phenanthrenequinone, are the best substrates (in vitro). May act in the detoxification of xenobiotics. Interacts with (AU)-rich elements (ARE) in the 3'-UTR of target mRNA species and enhances their stability. NADPH binding interferes with mRNA binding. This Rattus norvegicus (Rat) protein is Quinone oxidoreductase (Cryz).